A 499-amino-acid chain; its full sequence is Probable alginate O-acetylase AlgI (499 aa).

The next 11 membrane-spanning stretches (helical) occupy residues 7–25, 40–62, 78–100, 115–137, 150–172, 239–261, 312–334, 354–373, 380–397, 407–429, and 475–497; these read VFLFLFLPLFLGLYYLSPA, YAWWRIDFLGLFAAVTVFNYWIG, WLTLGVVVDLCVLGYFKYANFGV, FVVTHILLPIGISFYVFESISYI, NLVDFAAFVAIFPHLIAGPVLRF, LYFDFSGYSDMAIGLGLMIGFRF, ILTMLLGGLWHGANWTFIIWGAW, IRPLRWVFAFLLVMVGWVIF, VAWRMYAAMFSFGDWTLS, LQIATLLLAYVVIAVYGIRQFYA, and VLLLFAASVLKLSAQSFSPFLYF. Residue histidine 322 is part of the active site.

It belongs to the membrane-bound acyltransferase family.

Its subcellular location is the cell inner membrane. Its pathway is glycan biosynthesis; alginate biosynthesis. In terms of biological role, together with AlgJ and AlgF, forms an inner membrane complex which probably interacts with the alginate polymerization-transport complex and adds acetyl groups at the O-2 and O-3 positions of mannuronate residues. Acetylation of alginate increases cyst resistance to desiccation. The sequence is that of Probable alginate O-acetylase AlgI (algI) from Azotobacter vinelandii.